Reading from the N-terminus, the 102-residue chain is Glutaredoxin 1 (102 aa).

Positions 1–96 (MNKAILHTII…KLLENQPKTT (96 aa)) constitute a Glutaredoxin domain. C17 and C20 are disulfide-bonded.

It belongs to the glutaredoxin family. As to quaternary structure, monomer.

It localises to the cytoplasm. In terms of biological role, has a glutathione-disulfide oxidoreductase activity in the presence of NADPH and glutathione reductase. Reduces low molecular weight disulfides and proteins. This chain is Glutaredoxin 1 (grxC1), found in Rickettsia conorii (strain ATCC VR-613 / Malish 7).